The chain runs to 471 residues: Cysteine--tRNA ligase (471 aa).

Cys30 is a binding site for Zn(2+). The 'HIGH' region motif lies at 32–42; that stretch reads PTVYNFAHIGN. Cys212, His237, and Glu241 together coordinate Zn(2+). Positions 270 to 274 match the 'KMSKS' region motif; that stretch reads KMSKS. Residue Lys273 participates in ATP binding.

Belongs to the class-I aminoacyl-tRNA synthetase family. As to quaternary structure, monomer. Zn(2+) serves as cofactor.

It is found in the cytoplasm. It catalyses the reaction tRNA(Cys) + L-cysteine + ATP = L-cysteinyl-tRNA(Cys) + AMP + diphosphate. The protein is Cysteine--tRNA ligase of Leptospira interrogans serogroup Icterohaemorrhagiae serovar copenhageni (strain Fiocruz L1-130).